The sequence spans 864 residues: Alanine--tRNA ligase (864 aa).

Residues histidine 534, histidine 538, cysteine 639, and histidine 643 each contribute to the Zn(2+) site.

It belongs to the class-II aminoacyl-tRNA synthetase family. Requires Zn(2+) as cofactor.

It localises to the cytoplasm. The enzyme catalyses tRNA(Ala) + L-alanine + ATP = L-alanyl-tRNA(Ala) + AMP + diphosphate. Catalyzes the attachment of alanine to tRNA(Ala) in a two-step reaction: alanine is first activated by ATP to form Ala-AMP and then transferred to the acceptor end of tRNA(Ala). Also edits incorrectly charged Ser-tRNA(Ala) and Gly-tRNA(Ala) via its editing domain. This is Alanine--tRNA ligase from Onion yellows phytoplasma (strain OY-M).